A 266-amino-acid chain; its full sequence is Ras-like protein family member 12 (266 aa).

GTP-binding positions include 27–34 (GRRGAGKS), 74–78 (DTADL), and 134–137 (NKLD).

This sequence belongs to the small GTPase superfamily. Ras family.

The catalysed reaction is GTP + H2O = GDP + phosphate + H(+). The protein is Ras-like protein family member 12 (RASL12) of Homo sapiens (Human).